Consider the following 82-residue polypeptide: Small ribosomal subunit protein bS16 (82 aa).

Belongs to the bacterial ribosomal protein bS16 family.

This Vibrio cholerae serotype O1 (strain ATCC 39541 / Classical Ogawa 395 / O395) protein is Small ribosomal subunit protein bS16.